A 383-amino-acid polypeptide reads, in one-letter code: Succinate--CoA ligase [ADP-forming] subunit beta 2 (383 aa).

An ATP-grasp domain is found at 9–231 (RELFKEHGIV…QEDADSLEAR (223 aa)). Residues lysine 45, 52–54 (GRG), cysteine 94, and glutamate 99 contribute to the ATP site. Residues asparagine 187 and aspartate 201 each contribute to the Mg(2+) site. Substrate is bound by residues asparagine 251 and 308–310 (GIT).

This sequence belongs to the succinate/malate CoA ligase beta subunit family. Heterotetramer of two alpha and two beta subunits. Mg(2+) is required as a cofactor.

The enzyme catalyses succinate + ATP + CoA = succinyl-CoA + ADP + phosphate. It catalyses the reaction GTP + succinate + CoA = succinyl-CoA + GDP + phosphate. It participates in carbohydrate metabolism; tricarboxylic acid cycle; succinate from succinyl-CoA (ligase route): step 1/1. Functionally, succinyl-CoA synthetase functions in the citric acid cycle (TCA), coupling the hydrolysis of succinyl-CoA to the synthesis of either ATP or GTP and thus represents the only step of substrate-level phosphorylation in the TCA. The beta subunit provides nucleotide specificity of the enzyme and binds the substrate succinate, while the binding sites for coenzyme A and phosphate are found in the alpha subunit. In Streptomyces coelicolor (strain ATCC BAA-471 / A3(2) / M145), this protein is Succinate--CoA ligase [ADP-forming] subunit beta 2.